Reading from the N-terminus, the 252-residue chain is MTPLLIASDVNIFYGEKQAVCGVNLNVQRGTVNALIGPSGCGKTTFLRAINRMHDLTPGARVTGRITLDGEDIYGPRVDPVTMRRRVGMVFQKPNPFPTMSVFDNVVSGLRLAGIRDRDHLMEVAERSLRGAALWDEVKDRLKTPATGLSGGQQQRLCIARALAVEPEILLMDEPTSALDPASTARIEDLMTDLKKVTTIIIVTHNMHQAARVSDTTSFFLNGELVEHGPTEQLFTSPRDERTEAYVTGRFG.

In terms of domain architecture, ABC transporter spans 5–247 (LIASDVNIFY…PRDERTEAYV (243 aa)). Position 37-44 (37-44 (GPSGCGKT)) interacts with ATP.

The protein belongs to the ABC transporter superfamily. Phosphate importer (TC 3.A.1.7) family. The complex is composed of two ATP-binding proteins (PstB), two transmembrane proteins (PstC and PstA) and a solute-binding protein (PstS).

It localises to the cell membrane. The catalysed reaction is phosphate(out) + ATP + H2O = ADP + 2 phosphate(in) + H(+). In terms of biological role, part of the ABC transporter complex PstSACB involved in phosphate import. Responsible for energy coupling to the transport system. The sequence is that of Phosphate import ATP-binding protein PstB from Deinococcus geothermalis (strain DSM 11300 / CIP 105573 / AG-3a).